The sequence spans 380 residues: Queuine tRNA-ribosyltransferase (380 aa).

The active-site Proton acceptor is Asp-96. Substrate is bound by residues 96 to 100 (DSGGF), Asp-150, Gln-193, and Gly-220. The segment at 251–257 (GVGAPDS) is RNA binding. The active-site Nucleophile is Asp-270. The segment at 275–279 (TRIAR) is RNA binding; important for wobble base 34 recognition. 4 residues coordinate Zn(2+): Cys-308, Cys-310, Cys-313, and His-339.

This sequence belongs to the queuine tRNA-ribosyltransferase family. Homodimer. Within each dimer, one monomer is responsible for RNA recognition and catalysis, while the other monomer binds to the replacement base PreQ1. Zn(2+) is required as a cofactor.

The enzyme catalyses 7-aminomethyl-7-carbaguanine + guanosine(34) in tRNA = 7-aminomethyl-7-carbaguanosine(34) in tRNA + guanine. It participates in tRNA modification; tRNA-queuosine biosynthesis. Functionally, catalyzes the base-exchange of a guanine (G) residue with the queuine precursor 7-aminomethyl-7-deazaguanine (PreQ1) at position 34 (anticodon wobble position) in tRNAs with GU(N) anticodons (tRNA-Asp, -Asn, -His and -Tyr). Catalysis occurs through a double-displacement mechanism. The nucleophile active site attacks the C1' of nucleotide 34 to detach the guanine base from the RNA, forming a covalent enzyme-RNA intermediate. The proton acceptor active site deprotonates the incoming PreQ1, allowing a nucleophilic attack on the C1' of the ribose to form the product. After dissociation, two additional enzymatic reactions on the tRNA convert PreQ1 to queuine (Q), resulting in the hypermodified nucleoside queuosine (7-(((4,5-cis-dihydroxy-2-cyclopenten-1-yl)amino)methyl)-7-deazaguanosine). This chain is Queuine tRNA-ribosyltransferase, found in Streptococcus pneumoniae (strain Taiwan19F-14).